A 489-amino-acid chain; its full sequence is MTAIVCVSLLSEKAVLVKNLTDHVKAFYESIIGRFVSGPDTITEKRTMDSVIARKIVPSSTVILDGYGESFIRENPNATLMDIVTSSNNTAPKTTYQSIMPAMSALLGVPYVQGAFRHGIISKHGGKKTSLIILVVAPPSGFIRAASVGSSSSVVEVDSNATIKLDDTVGINSAMIKNTKLVSAAGLTAMGIEEIPIKCNSLDSLIIGWSMKYFKGYVDGYKSGVRDQATTILLNTPFKDLFVENGAGRMLPNDSFRVSESTIKNQVIEMGEGTKPDALISTHGDVFIDSEAVFTSDEQEKYRKDKDEEFFKKCVCNHIIAGDYGNNVIIIENPPHSDVRGLGVKYSFQVNKPELDGTESNGIKYYSKDTPQQIHDAILDVISDTNKSLLMNSKPIERTGKEAIAVCFKNGFPKKFAMVEMEKNGVKIVGMGDSPMLVLDNYPSMLSRAEKANRKSSRAKIDAPVVKIDTEDLDTNTLLDVIKKEVGSR.

2 RNA-binding regions span residues 129–251 (TSLI…GRML) and 321–351 (AGDY…FQVN).

Belongs to the phytoreovirus protein P7 family.

It is found in the virion. Its subcellular location is the host cytoplasm. Probable component of the transcriptional machinery present in the inner capsid. Displays dsRNA binding activity and may play an important role in the sorting of viral RNA and virion assembly. Together with the RNA-directed RNA polymerase P1 and capping enzyme P5, forms an transcriptional complex positioned near the channels situated at each of the five-fold vertices of the core. In Rice gall dwarf virus (RGDV), this protein is Protein P7.